A 289-amino-acid chain; its full sequence is 4-hydroxy-3-methylbut-2-enyl diphosphate reductase (289 aa).

Cysteine 13 contributes to the [4Fe-4S] cluster binding site. Positions 42 and 74 each coordinate (2E)-4-hydroxy-3-methylbut-2-enyl diphosphate. Residues histidine 42 and histidine 74 each coordinate dimethylallyl diphosphate. Residues histidine 42 and histidine 74 each contribute to the isopentenyl diphosphate site. A [4Fe-4S] cluster-binding site is contributed by cysteine 96. Position 124 (histidine 124) interacts with (2E)-4-hydroxy-3-methylbut-2-enyl diphosphate. Histidine 124 provides a ligand contact to dimethylallyl diphosphate. Histidine 124 is a binding site for isopentenyl diphosphate. The active-site Proton donor is glutamate 126. Threonine 165 is a (2E)-4-hydroxy-3-methylbut-2-enyl diphosphate binding site. Cysteine 193 is a binding site for [4Fe-4S] cluster. Positions 221, 223, and 265 each coordinate (2E)-4-hydroxy-3-methylbut-2-enyl diphosphate. The dimethylallyl diphosphate site is built by serine 221, asparagine 223, and serine 265. The isopentenyl diphosphate site is built by serine 221, asparagine 223, and serine 265.

Belongs to the IspH family. The cofactor is [4Fe-4S] cluster.

It carries out the reaction isopentenyl diphosphate + 2 oxidized [2Fe-2S]-[ferredoxin] + H2O = (2E)-4-hydroxy-3-methylbut-2-enyl diphosphate + 2 reduced [2Fe-2S]-[ferredoxin] + 2 H(+). The catalysed reaction is dimethylallyl diphosphate + 2 oxidized [2Fe-2S]-[ferredoxin] + H2O = (2E)-4-hydroxy-3-methylbut-2-enyl diphosphate + 2 reduced [2Fe-2S]-[ferredoxin] + 2 H(+). Its pathway is isoprenoid biosynthesis; dimethylallyl diphosphate biosynthesis; dimethylallyl diphosphate from (2E)-4-hydroxy-3-methylbutenyl diphosphate: step 1/1. The protein operates within isoprenoid biosynthesis; isopentenyl diphosphate biosynthesis via DXP pathway; isopentenyl diphosphate from 1-deoxy-D-xylulose 5-phosphate: step 6/6. Its activity is regulated as follows. Highly sensitive to dioxygen. In terms of biological role, catalyzes the conversion of 1-hydroxy-2-methyl-2-(E)-butenyl 4-diphosphate (HMBPP) into a mixture of isopentenyl diphosphate (IPP) and dimethylallyl diphosphate (DMAPP). Acts in the terminal step of the DOXP/MEP pathway for isoprenoid precursor biosynthesis. The protein is 4-hydroxy-3-methylbut-2-enyl diphosphate reductase of Aquifex aeolicus (strain VF5).